We begin with the raw amino-acid sequence, 58 residues long: Small ribosomal subunit protein bS21 (58 aa).

Positions 32–42 (IRKREHYEKPS) are enriched in basic and acidic residues. Residues 32–58 (IRKREHYEKPSVRRKKKSEAARKRKFN) form a disordered region. The segment covering 43-58 (VRRKKKSEAARKRKFN) has biased composition (basic residues).

The protein belongs to the bacterial ribosomal protein bS21 family.

This Lachnospira eligens (strain ATCC 27750 / DSM 3376 / VPI C15-48 / C15-B4) (Eubacterium eligens) protein is Small ribosomal subunit protein bS21.